A 360-amino-acid polypeptide reads, in one-letter code: Arginase, non-hepatic 3 (360 aa).

Mn(2+) contacts are provided by His-122, Asp-145, His-147, and Asp-149. Substrate contacts are provided by residues 147–151, 158–160, and Asp-204; these read HADIN and SGN. Residues Asp-253 and Asp-255 each coordinate Mn(2+). Substrate-binding residues include Thr-267 and Glu-298.

The protein belongs to the arginase family. As to quaternary structure, homotrimer. It depends on Mn(2+) as a cofactor. Expressed at differing tadpole stages in tail, intestine, hindlimb and trunk region. Strongest in tadpole tail.

The enzyme catalyses L-arginine + H2O = urea + L-ornithine. It participates in nitrogen metabolism; urea cycle; L-ornithine and urea from L-arginine: step 1/1. Functionally, as well as its role in the urea cycle, may be involved in tissue remodeling. The sequence is that of Arginase, non-hepatic 3 (arg2-c) from Xenopus laevis (African clawed frog).